Consider the following 338-residue polypeptide: Glutamyl-tRNA reductase (338 aa).

Substrate is bound by residues 50–53 (TCHR), Ser-102, 107–109 (ETE), and Gln-113. The Nucleophile role is filled by Cys-51. 181 to 186 (GYSDIN) serves as a coordination point for NADP(+).

The protein belongs to the glutamyl-tRNA reductase family. In terms of assembly, homodimer.

The enzyme catalyses (S)-4-amino-5-oxopentanoate + tRNA(Glu) + NADP(+) = L-glutamyl-tRNA(Glu) + NADPH + H(+). It participates in porphyrin-containing compound metabolism; protoporphyrin-IX biosynthesis; 5-aminolevulinate from L-glutamyl-tRNA(Glu): step 1/2. Catalyzes the NADPH-dependent reduction of glutamyl-tRNA(Glu) to glutamate 1-semialdehyde (GSA). The sequence is that of Glutamyl-tRNA reductase from Chlamydia caviae (strain ATCC VR-813 / DSM 19441 / 03DC25 / GPIC) (Chlamydophila caviae).